We begin with the raw amino-acid sequence, 327 residues long: Selenate reductase subunit beta (327 aa).

3 consecutive 4Fe-4S ferredoxin-type domains span residues 6 to 35 (LAYVFDLNKCIGCHTCTMACKQLWTNRDGR), 124 to 155 (NHYFYLPRICNHCSNPACLAACPTKAIYKREE), and 157 to 186 (GLVVVDQSRCKGYRYCVKACPYGKMYFNLQ). [4Fe-4S] cluster contacts are provided by cysteine 15, cysteine 18, cysteine 21, cysteine 25, cysteine 133, cysteine 136, and cysteine 141. [3Fe-4S] cluster-binding residues include cysteine 145, cysteine 166, and cysteine 172. 5 residues coordinate [4Fe-4S] cluster: cysteine 176, cysteine 193, cysteine 196, cysteine 208, and cysteine 212.

In terms of assembly, heterotrimer of alpha (SerA), beta (SerB) and gamma (SerC) subunits. Requires [3Fe-4S] cluster as cofactor. [4Fe-4S] cluster is required as a cofactor.

The protein resides in the periplasm. It catalyses the reaction selenite + 2 Fe(III)-[cytochrome c] + H2O = 2 Fe(II)-[cytochrome] + selenate + 2 H(+). Its activity is regulated as follows. Enzyme isolated from cells grown in a tungstate rich environment shows a 20-fold reduction in selenate reductase activity. Functionally, component of the selenate reductase, which catalyzes the reduction of selenate to selenite and allows anaerobic growth with selenate as the sole terminal electron acceptor. A c-type di-heme cytochrome of the cytc4 family was shown to donate electrons to the selenate reductase in vitro. SerABC can also use reduced benzyl viologen or reduced methyl viologen as an electron donor. This subunit transfers electrons from SerC to SerA. The reductase is specific for selenate, and cannot reduce nitrate, nitrite, chlorate or sulfate. This is Selenate reductase subunit beta from Thauera selenatis.